A 156-amino-acid chain; its full sequence is 3-hydroxyacyl-[acyl-carrier-protein] dehydratase FabZ (156 aa).

The active site involves His-62.

Belongs to the thioester dehydratase family. FabZ subfamily.

The protein resides in the cytoplasm. It carries out the reaction a (3R)-hydroxyacyl-[ACP] = a (2E)-enoyl-[ACP] + H2O. Involved in unsaturated fatty acids biosynthesis. Catalyzes the dehydration of short chain beta-hydroxyacyl-ACPs and long chain saturated and unsaturated beta-hydroxyacyl-ACPs. The polypeptide is 3-hydroxyacyl-[acyl-carrier-protein] dehydratase FabZ (Parasynechococcus marenigrum (strain WH8102)).